A 124-amino-acid polypeptide reads, in one-letter code: MATINQLVRKPRVKKVVKSNVPALEACPQKRGVCTRVYTTTPKKPNSALRKVCRIRLTNGFEVTSYIGGEGHNLQEHSVVLIRGGRVKDLPGVRYHTVRGALDCAGVKDRKQGRSKYGVKRPKA.

Residue aspartate 89 is modified to 3-methylthioaspartic acid.

This sequence belongs to the universal ribosomal protein uS12 family. Part of the 30S ribosomal subunit. Contacts proteins S8 and S17. May interact with IF1 in the 30S initiation complex.

With S4 and S5 plays an important role in translational accuracy. Its function is as follows. Interacts with and stabilizes bases of the 16S rRNA that are involved in tRNA selection in the A site and with the mRNA backbone. Located at the interface of the 30S and 50S subunits, it traverses the body of the 30S subunit contacting proteins on the other side and probably holding the rRNA structure together. The combined cluster of proteins S8, S12 and S17 appears to hold together the shoulder and platform of the 30S subunit. In Mannheimia haemolytica (Pasteurella haemolytica), this protein is Small ribosomal subunit protein uS12 (rpsL).